We begin with the raw amino-acid sequence, 425 residues long: Glucose-1-phosphate adenylyltransferase (425 aa).

Residues tyrosine 109, glycine 175, 190-191 (EK), and serine 208 each bind alpha-D-glucose 1-phosphate.

This sequence belongs to the bacterial/plant glucose-1-phosphate adenylyltransferase family. In terms of assembly, homotetramer.

The enzyme catalyses alpha-D-glucose 1-phosphate + ATP + H(+) = ADP-alpha-D-glucose + diphosphate. Its pathway is glycan biosynthesis; glycogen biosynthesis. Its function is as follows. Involved in the biosynthesis of ADP-glucose, a building block required for the elongation reactions to produce glycogen. Catalyzes the reaction between ATP and alpha-D-glucose 1-phosphate (G1P) to produce pyrophosphate and ADP-Glc. This Saccharophagus degradans (strain 2-40 / ATCC 43961 / DSM 17024) protein is Glucose-1-phosphate adenylyltransferase.